The following is a 183-amino-acid chain: uncharacterized protein (183 aa).

This is an uncharacterized protein from Shigella flexneri.